The sequence spans 472 residues: Pyridine nucleotide-disulfide oxidoreductase domain-containing protein 1 (472 aa).

The protein belongs to the class-I pyridine nucleotide-disulfide oxidoreductase family. PYROXD1 subfamily. It depends on FAD as a cofactor.

Functionally, probable oxidoreductase. The polypeptide is Pyridine nucleotide-disulfide oxidoreductase domain-containing protein 1 (Drosophila melanogaster (Fruit fly)).